A 157-amino-acid chain; its full sequence is Cyclic pyranopterin monophosphate synthase (157 aa).

Substrate-binding positions include 74–76 (MCH) and 112–113 (ME). The active site involves aspartate 127.

It belongs to the MoaC family. As to quaternary structure, homohexamer; trimer of dimers.

It carries out the reaction (8S)-3',8-cyclo-7,8-dihydroguanosine 5'-triphosphate = cyclic pyranopterin phosphate + diphosphate. Its pathway is cofactor biosynthesis; molybdopterin biosynthesis. Functionally, catalyzes the conversion of (8S)-3',8-cyclo-7,8-dihydroguanosine 5'-triphosphate to cyclic pyranopterin monophosphate (cPMP). The protein is Cyclic pyranopterin monophosphate synthase of Syntrophomonas wolfei subsp. wolfei (strain DSM 2245B / Goettingen).